The following is a 464-amino-acid chain: 26S proteasome regulatory subunit 7 homolog B (464 aa).

An ATP-binding site is contributed by 246-253 (GPPGSGKT). Residue Lys452 forms a Glycyl lysine isopeptide (Lys-Gly) (interchain with G-Cter in ubiquitin) linkage.

This sequence belongs to the AAA ATPase family. As to quaternary structure, component of the 19S regulatory particle (RP/PA700) base subcomplex of the 26S proteasome. The 26S proteasome is composed of a core protease (CP), known as the 20S proteasome, capped at one or both ends by the 19S regulatory particle (RP/PA700). The RP/PA700 complex is composed of at least 17 different subunits in two subcomplexes, the base and the lid, which form the portions proximal and distal to the 20S proteolytic core, respectively.

The protein localises to the cytoplasm. The protein resides in the nucleus. Its function is as follows. The 26S proteasome is involved in the ATP-dependent degradation of ubiquitinated proteins. The regulatory (or ATPase) complex confers ATP dependency and substrate specificity to the 26S complex. The chain is 26S proteasome regulatory subunit 7 homolog B (RPT1B) from Arabidopsis thaliana (Mouse-ear cress).